We begin with the raw amino-acid sequence, 164 residues long: UPF0201 protein MA_4659 (164 aa).

It belongs to the UPF0201 family.

The chain is UPF0201 protein MA_4659 from Methanosarcina acetivorans (strain ATCC 35395 / DSM 2834 / JCM 12185 / C2A).